The sequence spans 827 residues: Copper-transporting ATPase 2 (827 aa).

HMA domains are found at residues 15–80 and 82–148; these read VSTN…YAPR and ATEE…YELR. Cysteine 26, cysteine 29, cysteine 93, and cysteine 96 together coordinate Cu cation. Helical transmembrane passes span 174-194, 210-230, 246-266, 271-291, 430-450, and 458-478; these read VTIS…SHFI, NLYL…LRFF, SLVV…TFVP, SGTA…VLLG, GWFV…WYTF, and FALV…MGLA. The active-site 4-aspartylphosphate intermediate is aspartate 515. Residues aspartate 714 and aspartate 718 each coordinate Mg(2+). 2 consecutive transmembrane segments (helical) span residues 771 to 793 and 797 to 819; these read NLFW…LYPV and LLSP…GNAL.

The protein belongs to the cation transport ATPase (P-type) (TC 3.A.3) family. Type IB subfamily.

Its subcellular location is the cell membrane. The enzyme catalyses Cu(2+)(in) + ATP + H2O = Cu(2+)(out) + ADP + phosphate + H(+). Its function is as follows. Involved in copper transport. The chain is Copper-transporting ATPase 2 (actP2) from Rhizobium meliloti (strain 1021) (Ensifer meliloti).